Reading from the N-terminus, the 385-residue chain is Polyketide synthase 4 (385 aa).

Cysteine 157 is an active-site residue.

The protein belongs to the thiolase-like superfamily. Chalcone/stilbene synthases family. In terms of tissue distribution, expressed in glandular trichomes.

It is found in the cytoplasm. In terms of biological role, polyketide synthase responsible for the biosynthesis of secondary metabolites. The chain is Polyketide synthase 4 (PKSG4) from Cannabis sativa (Hemp).